The primary structure comprises 156 residues: Small ribosomal subunit protein uS7 (156 aa).

It belongs to the universal ribosomal protein uS7 family. In terms of assembly, part of the 30S ribosomal subunit. Contacts proteins S9 and S11.

In terms of biological role, one of the primary rRNA binding proteins, it binds directly to 16S rRNA where it nucleates assembly of the head domain of the 30S subunit. Is located at the subunit interface close to the decoding center, probably blocks exit of the E-site tRNA. The polypeptide is Small ribosomal subunit protein uS7 (Vibrio parahaemolyticus serotype O3:K6 (strain RIMD 2210633)).